Reading from the N-terminus, the 260-residue chain is 5-oxoprolinase subunit A (260 aa).

It belongs to the LamB/PxpA family. As to quaternary structure, forms a complex composed of PxpA, PxpB and PxpC.

The enzyme catalyses 5-oxo-L-proline + ATP + 2 H2O = L-glutamate + ADP + phosphate + H(+). Its function is as follows. Catalyzes the cleavage of 5-oxoproline to form L-glutamate coupled to the hydrolysis of ATP to ADP and inorganic phosphate. This chain is 5-oxoprolinase subunit A, found in Methylococcus capsulatus (strain ATCC 33009 / NCIMB 11132 / Bath).